A 246-amino-acid chain; its full sequence is Homeobox protein SIX6 (246 aa).

Residues 128–187 (GEQKTHCFKERTRHLLREWYLQDPYPNPSKKRELAQATGLTPTQVGNWFKNRRQRDRAAA) constitute a DNA-binding region (homeobox). The segment at 190–246 (NRLQQQVLSQGSGRALRAEGDGTPEVLGVATSPAASLSSKAATSAISITSSDSECDI) is disordered. Residues 191-201 (RLQQQVLSQGS) are compositionally biased toward polar residues. Phosphothreonine is present on T212. Low complexity predominate over residues 219-246 (ATSPAASLSSKAATSAISITSSDSECDI). Phosphoserine is present on residues S221, S225, S227, and S228.

This sequence belongs to the SIX/Sine oculis homeobox family. In terms of assembly, interacts with TLE4 and TLE5. As to expression, expressed in the developing and adult retina. Also expressed in the hypothalamic and the pituitary regions.

Its subcellular location is the nucleus. May be involved in eye development. The chain is Homeobox protein SIX6 (SIX6) from Homo sapiens (Human).